Here is a 421-residue protein sequence, read N- to C-terminus: D-amino acid dehydrogenase (421 aa).

3-17 (VIVLGSGVIGVASAY) is an FAD binding site.

The protein belongs to the DadA oxidoreductase family. Requires FAD as cofactor.

The enzyme catalyses a D-alpha-amino acid + A + H2O = a 2-oxocarboxylate + AH2 + NH4(+). Its pathway is amino-acid degradation; D-alanine degradation; NH(3) and pyruvate from D-alanine: step 1/1. In terms of biological role, oxidative deamination of D-amino acids. This Acinetobacter baumannii (strain SDF) protein is D-amino acid dehydrogenase.